Here is a 429-residue protein sequence, read N- to C-terminus: Histidine--tRNA ligase (429 aa).

It belongs to the class-II aminoacyl-tRNA synthetase family. As to quaternary structure, homodimer.

The protein localises to the cytoplasm. It catalyses the reaction tRNA(His) + L-histidine + ATP = L-histidyl-tRNA(His) + AMP + diphosphate + H(+). The polypeptide is Histidine--tRNA ligase (Streptococcus pneumoniae (strain CGSP14)).